Consider the following 397-residue polypeptide: uncharacterized protein (397 aa).

Belongs to the ROK (NagC/XylR) family.

This is an uncharacterized protein from Escherichia coli (strain K12).